A 191-amino-acid polypeptide reads, in one-letter code: Ribosomal RNA small subunit methyltransferase G (191 aa).

Residues Gly62, Phe67, 111-112, and Arg124 each bind S-adenosyl-L-methionine; that span reads IE.

This sequence belongs to the methyltransferase superfamily. RNA methyltransferase RsmG family.

Its subcellular location is the cytoplasm. It catalyses the reaction guanosine(527) in 16S rRNA + S-adenosyl-L-methionine = N(7)-methylguanosine(527) in 16S rRNA + S-adenosyl-L-homocysteine. Its function is as follows. Specifically methylates the N7 position of guanine in position 527 of 16S rRNA. This chain is Ribosomal RNA small subunit methyltransferase G, found in Rickettsia akari (strain Hartford).